The chain runs to 164 residues: Phosphopantetheine adenylyltransferase (164 aa).

A substrate-binding site is contributed by Ser-9. Residues 9 to 10 and His-17 each bind ATP; that span reads SF. Substrate contacts are provided by Lys-41, Val-78, and Arg-92. Residues 93 to 95, Glu-103, and 128 to 134 contribute to the ATP site; these read GLR and VRTITAT.

Belongs to the bacterial CoaD family. As to quaternary structure, homohexamer. The cofactor is Mg(2+).

The protein localises to the cytoplasm. The enzyme catalyses (R)-4'-phosphopantetheine + ATP + H(+) = 3'-dephospho-CoA + diphosphate. Its pathway is cofactor biosynthesis; coenzyme A biosynthesis; CoA from (R)-pantothenate: step 4/5. Its function is as follows. Reversibly transfers an adenylyl group from ATP to 4'-phosphopantetheine, yielding dephospho-CoA (dPCoA) and pyrophosphate. The polypeptide is Phosphopantetheine adenylyltransferase (Brucella abortus (strain 2308)).